Consider the following 536-residue polypeptide: Sensory rhodopsin I transducer (536 aa).

Over 2-14 the chain is Cytoplasmic; it reads TIAWARRRYGVKL. A helical membrane pass occupies residues 15-29; the sequence is GLGYIATAGLLVGVG. Over 30-39 the chain is Extracellular; sequence VTTNDVPSTI. The chain crosses the membrane as a helical span at residues 40-55; sequence VAGIAGLLTLGSINAA. The region spanning 55–107 is the HAMP 1 domain; sequence AETVASIKEIAAQTERVANGNLEQEVTSTRTDEFGSLADSIEQMRQSLRGRLN. Over 56 to 536 the chain is Cytoplasmic; it reads ETVASIKEIA…MRAGADGGGA (481 aa). Residues 116 to 145 are disordered; that stretch reads LEETQAEAETAREEAEQAKQEAQAAEREAR. The segment covering 124–145 has biased composition (basic and acidic residues); it reads ETAREEAEQAKQEAQAAEREAR. One can recognise an HAMP 2 domain in the interval 149 to 202; sequence ATYQDTAKRYGETMEAAATGDLTQRVDVDTDHEAMETVGTAFNQMMDDLQATVR. Positions 221–459 constitute a Methyl-accepting transducer domain; it reads TSADIEASAG…STATSVERVA (239 aa). The residue at position 266 (Glu-266) is a Glutamate methyl ester (Glu). A disordered region spans residues 278–307; that stretch reads SEDVATASDAARDSSKSALDEMSSIETEVD. Residues 287 to 296 are compositionally biased toward basic and acidic residues; the sequence is AARDSSKSAL. Residue Glu-473 is modified to Glutamate methyl ester (Glu). A disordered region spans residues 512–536; it reads TEDSETAGGSVEQPVMRAGADGGGA.

This sequence belongs to the methyl-accepting chemotaxis (MCP) protein family. Post-translationally, methylated by CheR.

The protein localises to the cell membrane. In terms of biological role, transduces signals from the phototaxis receptor sensory rhodopsin I (SR-I) to the flagellar motor. Responds to light changes through the variation of the level of methylation. The protein is Sensory rhodopsin I transducer (htr1) of Halobacterium salinarum (strain ATCC 29341 / DSM 671 / R1).